The primary structure comprises 796 residues: Choline transporter-like 2 (796 aa).

Residue asparagine 20 is glycosylated (N-linked (GlcNAc...) asparagine). A helical transmembrane segment spans residues 35-55; the sequence is PCLLLFVLFLGGWAFIAQYAI. 2 N-linked (GlcNAc...) asparagine glycosylation sites follow: asparagine 209 and asparagine 284. 4 consecutive transmembrane segments (helical) span residues 304–324, 332–352, 386–406, and 431–451; these read WSIV…YIAL, ILWF…YFSV, LYLS…VIVL, and VFFP…AIGV. Asparagine 488 and asparagine 520 each carry an N-linked (GlcNAc...) asparagine glycan. 5 consecutive transmembrane segments (helical) span residues 542 to 562, 585 to 605, 626 to 648, 691 to 711, and 724 to 744; these read VFGF…VLAS, FFQT…ILAI, AVTR…FLKF, FLFF…TYYF, and IAVP…VFFG.

The protein belongs to the CTL (choline transporter-like) family.

Its subcellular location is the membrane. This chain is Choline transporter-like 2, found in Drosophila melanogaster (Fruit fly).